The primary structure comprises 413 residues: Elongation factor 1-alpha (413 aa).

GTP is bound by residues 1-7 (HVDSGKS), 77-81 (DAPGH), and 139-142 (NKMD). Positions 1 to 228 (HVDSGKSTTT…DAILPPARPT (228 aa)) constitute a tr-type G domain. 2 positions are modified to 5-glutamyl glycerylphosphorylethanolamine: Glu287 and Glu360.

This sequence belongs to the TRAFAC class translation factor GTPase superfamily. Classic translation factor GTPase family. EF-Tu/EF-1A subfamily.

It localises to the cytoplasm. This protein promotes the GTP-dependent binding of aminoacyl-tRNA to the A-site of ribosomes during protein biosynthesis. This is Elongation factor 1-alpha from Heliocheilus albipunctella (Millet head miner).